A 722-amino-acid chain; its full sequence is Pesticidal crystal protein Cry22Aa (722 aa).

Promotes colloidosmotic lysis by binding to the midgut epithelial cells of hymenopteran species. This chain is Pesticidal crystal protein Cry22Aa (cry22Aa), found in Bacillus thuringiensis.